A 983-amino-acid chain; its full sequence is Importin beta-like protein kap113 (983 aa).

The region spanning 24–96 is the Importin N-terminal domain; sequence AEGHLNNWKK…RCNALLGSIK (73 aa).

Belongs to the importin beta family.

The protein localises to the nucleus. Its function is as follows. Functions as a component of the nuclear pore complex (NPC). NPC components, collectively referred to as nucleoporins (NUPs), can play the role of both NPC structural components and of docking or interaction partners for transiently associated nuclear transport factors. Active directional transport is assured by both, a Phe-Gly (FG) repeat affinity gradient for these transport factors across the NPC and a transport cofactor concentration gradient across the nuclear envelope. Involved in the export of mRNA from the nucleus to the cytoplasm. May play a role in mitotic spindle formation and/or function. This chain is Importin beta-like protein kap113 (kap113), found in Schizosaccharomyces pombe (strain 972 / ATCC 24843) (Fission yeast).